The following is a 235-amino-acid chain: Phosphoribosylaminoimidazole-succinocarboxamide synthase (235 aa).

It belongs to the SAICAR synthetase family.

The enzyme catalyses 5-amino-1-(5-phospho-D-ribosyl)imidazole-4-carboxylate + L-aspartate + ATP = (2S)-2-[5-amino-1-(5-phospho-beta-D-ribosyl)imidazole-4-carboxamido]succinate + ADP + phosphate + 2 H(+). Its pathway is purine metabolism; IMP biosynthesis via de novo pathway; 5-amino-1-(5-phospho-D-ribosyl)imidazole-4-carboxamide from 5-amino-1-(5-phospho-D-ribosyl)imidazole-4-carboxylate: step 1/2. The sequence is that of Phosphoribosylaminoimidazole-succinocarboxamide synthase from Chloroherpeton thalassium (strain ATCC 35110 / GB-78).